Consider the following 61-residue polypeptide: MALKITQIKGTVGTKPKHRDNLRSLGLKRIRHTVIRPDTPEVRGMILAVRHLIVVEEVAGE.

It belongs to the universal ribosomal protein uL30 family. In terms of assembly, part of the 50S ribosomal subunit.

The protein is Large ribosomal subunit protein uL30 of Corynebacterium glutamicum (strain R).